Consider the following 360-residue polypeptide: Peptide chain release factor 1 (360 aa).

Residue Gln235 is modified to N5-methylglutamine.

Belongs to the prokaryotic/mitochondrial release factor family. Post-translationally, methylated by PrmC. Methylation increases the termination efficiency of RF1.

Its subcellular location is the cytoplasm. Peptide chain release factor 1 directs the termination of translation in response to the peptide chain termination codons UAG and UAA. The sequence is that of Peptide chain release factor 1 from Burkholderia mallei (strain NCTC 10247).